The chain runs to 121 residues: Protein TCL1B5 (121 aa).

It belongs to the TCL1 family.

The protein is Protein TCL1B5 (Tcl1b5) of Mus musculus (Mouse).